An 891-amino-acid polypeptide reads, in one-letter code: Protein SEY1 homolog (891 aa).

At 1–754 (MNLHLVDSDG…LRAAEAGNQR (754 aa)) the chain is on the cytoplasmic side. In terms of domain architecture, GB1/RHD3-type G spans 52-318 (GLNYHVVGVF…RCSDYLFSYH (267 aa)). 62 to 69 (GGQSSGKS) provides a ligand contact to GTP. Residues 755 to 775 (LPAWVIPALFILGWNELLYVL) form a helical membrane-spanning segment. At 776–778 (TSP) the chain is on the lumenal side. The helical transmembrane segment at 779 to 799 (ALLVLVVVICAVFFRQFFVSQ) threads the bilayer. Residues 800–891 (WHAFEETGPA…MRHRTTHKLD (92 aa)) lie on the Cytoplasmic side of the membrane. Positions 863–880 (STHADPAPSNTTVPTAQA) are enriched in polar residues. The disordered stretch occupies residues 863–891 (STHADPAPSNTTVPTAQATMRHRTTHKLD). Residues 882–891 (MRHRTTHKLD) are compositionally biased toward basic residues.

This sequence belongs to the TRAFAC class dynamin-like GTPase superfamily. GB1/RHD3 GTPase family. RHD3 subfamily.

Its subcellular location is the endoplasmic reticulum membrane. Probable GTP-binding protein that may be involved in cell development. The polypeptide is Protein SEY1 homolog (Leishmania braziliensis).